The following is a 345-amino-acid chain: Protein phosphatase 1 regulatory subunit 7 (345 aa).

Residues methionine 1 to aspartate 53 are disordered. Positions glutamate 13–arginine 30 are enriched in basic and acidic residues. LRR repeat units follow at residues glutamate 62 to leucine 83, lysine 84 to valine 105, serine 106 to threonine 127, glutamate 128 to threonine 149, lysine 150 to threonine 171, serine 172 to serine 193, serine 194 to histidine 215, asparagine 216 to valine 237, asparagine 238 to lysine 259, lysine 260 to threonine 281, and aspartate 282 to lysine 303. The 30-residue stretch at asparagine 316–phenylalanine 345 folds into the LRRCT domain.

Belongs to the SDS22 family.

The protein resides in the nucleus. Functionally, regulatory subunit of protein phosphatase 1. This Danio rerio (Zebrafish) protein is Protein phosphatase 1 regulatory subunit 7 (ppp1r7).